Reading from the N-terminus, the 898-residue chain is Transportin-1 (898 aa).

HEAT repeat units lie at residues 19–46 (GLQQ…QKLE), 51–89 (YPDF…AHFQ), 98–131 (FIKS…KGEL), 137–174 (LLPK…LDSD), 181–211 (NIMI…QFII), 224–251 (FIEN…VMLL), 263–290 (HNIV…FWLT), 306–397 (PKLI…LANV), 405–433 (HILP…GAIA), 445–472 (PELI…TLSR), 486–519 (LKPL…EEEA), 527–560 (LAYI…ADSV), 568–606 (EYIQ…TALQ), 614–665 (EPVY…GLGG), 676–707 (ILTL…KACF), 715–748 (ADFM…IQMG), 756–791 (PMVL…YVCP), 799–832 (QQFI…ISVN), 841–872 (IFFC…KNQV), and 875–895 (ENWR…LAAF). Residues 41–109 (VQQKLEQLNQ…KSECLNNIGD (69 aa)) enclose the Importin N-terminal domain. A disordered region spans residues 347–374 (FHRSRTVAQQHEEDGIEEEDDDDDEIDD). The segment covering 360–374 (DGIEEEDDDDDEIDD) has biased composition (acidic residues).

The protein belongs to the importin beta family. Importin beta-2 subfamily. As to quaternary structure, identified in a complex that contains TNPO1, RAN and RANBP1. Binds HNRPA1, HNRPA2, HNRNPDL, RPS7, RPL5 and RAN. Interacts with H2A, H2B, H3 and H4 histones. Interacts with isoform 1 and isoform 5 of ADAR/ADAR1 (via DRBM 3 domain). Interacts with SNAI1 (via zinc fingers); the interaction mediates SNAI1 nuclear import. Interacts with SNAI2 (via zinc fingers). Interacts with RPL23A (via BIB domain) and SRP19; this interaction is involved in RPL23A and SRP19 import into the nucleus. Interacts (via HEAT repeats 8-12) with BAP1 (via non-classical PY-NLS); this interaction is direct, is involved in BAP1 nuclear import and disrupts BAP1 homodimerization.

The protein resides in the cytoplasm. It localises to the nucleus. Functions in nuclear protein import as nuclear transport receptor. Serves as receptor for nuclear localization signals (NLS) in cargo substrates. May mediate docking of the importin/substrate complex to the nuclear pore complex (NPC) through binding to nucleoporin and the complex is subsequently translocated through the pore by an energy requiring, Ran-dependent mechanism. At the nucleoplasmic side of the NPC, Ran binds to the importin, the importin/substrate complex dissociates and importin is re-exported from the nucleus to the cytoplasm where GTP hydrolysis releases Ran. The directionality of nuclear import is thought to be conferred by an asymmetric distribution of the GTP- and GDP-bound forms of Ran between the cytoplasm and nucleus. Involved in nuclear import of M9-containing proteins. In vitro, binds directly to the M9 region of the heterogeneous nuclear ribonucleoproteins (hnRNP), A1 and A2 and mediates their nuclear import. Involved in hnRNP A1/A2 nuclear export. Mediates the nuclear import of ribosomal proteins RPL23A, RPS7 and RPL5. In vitro, mediates nuclear import of SRP19. Mediates the import of histones H2A, H2B, H3 and H4. Mediates nuclear import of ADAR/ADAR1 in a RanGTP-dependent manner. Main mediator of PR-DUB complex component BAP1 nuclear import; acts redundantly with the karyopherins KPNA1 and KPNA2. In Mus musculus (Mouse), this protein is Transportin-1 (Tnpo1).